Consider the following 419-residue polypeptide: L-rhamnose isomerase (419 aa).

Positions 262, 294, and 296 each coordinate Mn(2+).

This sequence belongs to the rhamnose isomerase family. As to quaternary structure, homotetramer. Mn(2+) is required as a cofactor.

Its subcellular location is the cytoplasm. It catalyses the reaction L-rhamnopyranose = L-rhamnulose. It functions in the pathway carbohydrate degradation; L-rhamnose degradation; glycerone phosphate from L-rhamnose: step 1/3. Its function is as follows. Catalyzes the interconversion of L-rhamnose and L-rhamnulose. This chain is L-rhamnose isomerase, found in Shigella flexneri serotype 5b (strain 8401).